The chain runs to 251 residues: Cytochrome c oxidase subunit 2 (251 aa).

The next 2 helical transmembrane spans lie at 42 to 62 (NIMF…FTIV) and 83 to 103 (IIWT…SFIL). Cu cation contacts are provided by His186, Cys221, Glu223, Cys225, His229, and Met232. Glu223 serves as a coordination point for Mg(2+).

It belongs to the cytochrome c oxidase subunit 2 family. Component of the cytochrome c oxidase (complex IV, CIV), a multisubunit enzyme composed of a catalytic core of 3 subunits and several supernumerary subunits. The complex exists as a monomer or a dimer and forms supercomplexes (SCs) in the inner mitochondrial membrane with ubiquinol-cytochrome c oxidoreductase (cytochrome b-c1 complex, complex III, CIII). It depends on Cu cation as a cofactor.

The protein resides in the mitochondrion inner membrane. It catalyses the reaction 4 Fe(II)-[cytochrome c] + O2 + 8 H(+)(in) = 4 Fe(III)-[cytochrome c] + 2 H2O + 4 H(+)(out). In terms of biological role, component of the cytochrome c oxidase, the last enzyme in the mitochondrial electron transport chain which drives oxidative phosphorylation. The respiratory chain contains 3 multisubunit complexes succinate dehydrogenase (complex II, CII), ubiquinol-cytochrome c oxidoreductase (cytochrome b-c1 complex, complex III, CIII) and cytochrome c oxidase (complex IV, CIV), that cooperate to transfer electrons derived from NADH and succinate to molecular oxygen, creating an electrochemical gradient over the inner membrane that drives transmembrane transport and the ATP synthase. Cytochrome c oxidase is the component of the respiratory chain that catalyzes the reduction of oxygen to water. Electrons originating from reduced cytochrome c in the intermembrane space (IMS) are transferred via the dinuclear copper A center (CU(A)) of subunit 2 and heme A of subunit 1 to the active site in subunit 1, a binuclear center (BNC) formed by heme A3 and copper B (CU(B)). The BNC reduces molecular oxygen to 2 water molecules using 4 electrons from cytochrome c in the IMS and 4 protons from the mitochondrial matrix. This chain is Cytochrome c oxidase subunit 2 (COX2), found in Candida glabrata (strain ATCC 2001 / BCRC 20586 / JCM 3761 / NBRC 0622 / NRRL Y-65 / CBS 138) (Yeast).